We begin with the raw amino-acid sequence, 134 residues long: Phosphoribosyl-AMP cyclohydrolase (134 aa).

Asp90 serves as a coordination point for Mg(2+). Position 91 (Cys91) interacts with Zn(2+). The Mg(2+) site is built by Asp92 and Asp94. The Zn(2+) site is built by Cys107 and Cys114.

Belongs to the PRA-CH family. Homodimer. Mg(2+) is required as a cofactor. The cofactor is Zn(2+).

It is found in the cytoplasm. It catalyses the reaction 1-(5-phospho-beta-D-ribosyl)-5'-AMP + H2O = 1-(5-phospho-beta-D-ribosyl)-5-[(5-phospho-beta-D-ribosylamino)methylideneamino]imidazole-4-carboxamide. Its pathway is amino-acid biosynthesis; L-histidine biosynthesis; L-histidine from 5-phospho-alpha-D-ribose 1-diphosphate: step 3/9. Catalyzes the hydrolysis of the adenine ring of phosphoribosyl-AMP. This Arthrobacter sp. (strain FB24) protein is Phosphoribosyl-AMP cyclohydrolase.